The following is a 197-amino-acid chain: Putative RNA-binding protein EEED8.12 (197 aa).

Residues 61–138 enclose the RRM domain; sequence KSVFIGNVDF…RPIVVTAKRT (78 aa). Residues 142 to 166 form a disordered region; sequence GMGHGVRGSSRGTFGRGRGAARGAP.

This is Putative RNA-binding protein EEED8.12 from Caenorhabditis elegans.